The chain runs to 318 residues: Biotin synthase (318 aa).

The region spanning 44 to 273 is the Radical SAM core domain; sequence LCGKKFNLCT…EKQIRLAGGR (230 aa). Cys62, Cys66, and Cys69 together coordinate [4Fe-4S] cluster. Residues Ser106, Cys138, Cys198, and Arg268 each contribute to the [2Fe-2S] cluster site.

Belongs to the radical SAM superfamily. Biotin synthase family. Homodimer. [4Fe-4S] cluster serves as cofactor. The cofactor is [2Fe-2S] cluster.

It carries out the reaction (4R,5S)-dethiobiotin + (sulfur carrier)-SH + 2 reduced [2Fe-2S]-[ferredoxin] + 2 S-adenosyl-L-methionine = (sulfur carrier)-H + biotin + 2 5'-deoxyadenosine + 2 L-methionine + 2 oxidized [2Fe-2S]-[ferredoxin]. The protein operates within cofactor biosynthesis; biotin biosynthesis; biotin from 7,8-diaminononanoate: step 2/2. Its function is as follows. Catalyzes the conversion of dethiobiotin (DTB) to biotin by the insertion of a sulfur atom into dethiobiotin via a radical-based mechanism. The protein is Biotin synthase of Clostridium botulinum (strain Alaska E43 / Type E3).